A 135-amino-acid chain; its full sequence is Small ribosomal subunit protein uS12 (135 aa).

Residues 1 to 24 form a disordered region; that stretch reads MPTINQLVRKGRHSKTTKSKSPAL. Basic residues predominate over residues 9–18; the sequence is RKGRHSKTTK. A 3-methylthioaspartic acid modification is found at Asp-102.

This sequence belongs to the universal ribosomal protein uS12 family. As to quaternary structure, part of the 30S ribosomal subunit. Contacts proteins S8 and S17. May interact with IF1 in the 30S initiation complex.

With S4 and S5 plays an important role in translational accuracy. Functionally, interacts with and stabilizes bases of the 16S rRNA that are involved in tRNA selection in the A site and with the mRNA backbone. Located at the interface of the 30S and 50S subunits, it traverses the body of the 30S subunit contacting proteins on the other side and probably holding the rRNA structure together. The combined cluster of proteins S8, S12 and S17 appears to hold together the shoulder and platform of the 30S subunit. This Lactobacillus delbrueckii subsp. bulgaricus (strain ATCC 11842 / DSM 20081 / BCRC 10696 / JCM 1002 / NBRC 13953 / NCIMB 11778 / NCTC 12712 / WDCM 00102 / Lb 14) protein is Small ribosomal subunit protein uS12.